The chain runs to 82 residues: MNTEKLKDIKARIKDFKSYKTSNSKIQQKINPFSIALDLVSGTMVGLLIGILTDKFFNSKPLFLIIFTIIGMIAGFNIIRRK.

Helical transmembrane passes span 32–52 (PFSI…IGIL) and 59–79 (SKPL…FNII).

The protein localises to the cell membrane. This is an uncharacterized protein from Rickettsia prowazekii (strain Madrid E).